A 294-amino-acid chain; its full sequence is Eukaryotic translation initiation factor 3 subunit F (294 aa).

The 144-residue stretch at 20-163 folds into the MPN domain; sequence VTVTAQALFQ…IDPSKNSGNC (144 aa).

The protein belongs to the eIF-3 subunit F family. As to quaternary structure, component of the eukaryotic translation initiation factor 3 (eIF-3) complex.

It localises to the cytoplasm. In terms of biological role, component of the eukaryotic translation initiation factor 3 (eIF-3) complex, which is involved in protein synthesis of a specialized repertoire of mRNAs and, together with other initiation factors, stimulates binding of mRNA and methionyl-tRNAi to the 40S ribosome. The eIF-3 complex specifically targets and initiates translation of a subset of mRNAs involved in cell proliferation. The protein is Eukaryotic translation initiation factor 3 subunit F of Yarrowia lipolytica (strain CLIB 122 / E 150) (Yeast).